The chain runs to 203 residues: Proteasome subunit beta 2 (203 aa).

A propeptide spans 1-9 (MGEEFQVGA) (removed in mature form; by autocatalysis). The active-site Nucleophile is the threonine 10.

Belongs to the peptidase T1B family. As to quaternary structure, the 20S proteasome core is composed of 14 alpha and 14 beta subunits that assemble into four stacked heptameric rings, resulting in a barrel-shaped structure. The two inner rings, each composed of seven catalytic beta subunits, are sandwiched by two outer rings, each composed of seven alpha subunits. The catalytic chamber with the active sites is on the inside of the barrel. Has a gated structure, the ends of the cylinder being occluded by the N-termini of the alpha-subunits. Is capped at one or both ends by the proteasome regulatory ATPase, PAN.

The protein localises to the cytoplasm. The catalysed reaction is Cleavage of peptide bonds with very broad specificity.. Its activity is regulated as follows. The formation of the proteasomal ATPase PAN-20S proteasome complex, via the docking of the C-termini of PAN into the intersubunit pockets in the alpha-rings, triggers opening of the gate for substrate entry. Interconversion between the open-gate and close-gate conformations leads to a dynamic regulation of the 20S proteasome proteolysis activity. Component of the proteasome core, a large protease complex with broad specificity involved in protein degradation. This is Proteasome subunit beta 2 from Pyrobaculum neutrophilum (strain DSM 2338 / JCM 9278 / NBRC 100436 / V24Sta) (Thermoproteus neutrophilus).